The sequence spans 243 residues: Homeobox protein goosecoid isoform A (243 aa).

Residues 148–207 constitute a DNA-binding region (homeobox); sequence KRRHRTIFTDEQLEALENLFQETKYPDVGTREQLARRVHLREEKVEVWFKNRRAKWRRQK. The interval 201–243 is disordered; the sequence is AKWRRQKRSSSEESENAQKWNKSSKNSAEKADEQVKSDLDSDS. Residues 217-226 show a composition bias toward polar residues; that stretch reads AQKWNKSSKN. A compositionally biased stretch (basic and acidic residues) spans 227-243; it reads SAEKADEQVKSDLDSDS.

This sequence belongs to the paired homeobox family. Bicoid subfamily. As to expression, at the start of gastrulation, it is found in a patch of cells encompassing 60 degrees of arc on the dorsal marginal zone.

It localises to the nucleus. Functionally, plays a central role in executing Spemann's organizer phenomenon (the dorsal blastopore lip of the early Xenopus laevis gastrula can organize a complete secondary body axis when transplanted to another embryo). This Xenopus laevis (African clawed frog) protein is Homeobox protein goosecoid isoform A (gsc-a).